The primary structure comprises 89 residues: Small ribosomal subunit protein uS15 (89 aa).

It belongs to the universal ribosomal protein uS15 family. In terms of assembly, part of the 30S ribosomal subunit. Forms a bridge to the 50S subunit in the 70S ribosome, contacting the 23S rRNA.

Functionally, one of the primary rRNA binding proteins, it binds directly to 16S rRNA where it helps nucleate assembly of the platform of the 30S subunit by binding and bridging several RNA helices of the 16S rRNA. In terms of biological role, forms an intersubunit bridge (bridge B4) with the 23S rRNA of the 50S subunit in the ribosome. The protein is Small ribosomal subunit protein uS15 of Nocardia farcinica (strain IFM 10152).